The chain runs to 231 residues: Putative N-acetylmannosamine-6-phosphate 2-epimerase (231 aa).

It belongs to the NanE family.

It catalyses the reaction an N-acyl-D-glucosamine 6-phosphate = an N-acyl-D-mannosamine 6-phosphate. It participates in amino-sugar metabolism; N-acetylneuraminate degradation; D-fructose 6-phosphate from N-acetylneuraminate: step 3/5. Functionally, converts N-acetylmannosamine-6-phosphate (ManNAc-6-P) to N-acetylglucosamine-6-phosphate (GlcNAc-6-P). This Latilactobacillus sakei subsp. sakei (strain 23K) (Lactobacillus sakei subsp. sakei) protein is Putative N-acetylmannosamine-6-phosphate 2-epimerase.